Here is a 538-residue protein sequence, read N- to C-terminus: Atos homolog protein B (538 aa).

Over residues 1 to 18 the composition is skewed to low complexity; the sequence is MRHVQAEPSPSSEPEAGP. Disordered regions lie at residues 1–103, 156–185, and 197–308; these read MRHV…GLLG, HTRDWASPDPGGHGSLGESPGPAPPGQLHT, and GGKS…PMGR. Over residues 227 to 238 the composition is skewed to pro residues; sequence HTPPGPGPPGPC. Phosphoserine is present on residues Ser-254 and Ser-255. Positions 274–286 are enriched in polar residues; sequence AANSSDAKATSFW. Residues 348–430 are required for macropage invasion; the sequence is LLGNFEESLL…VPKVGTVQVT (83 aa). The interval 436–444 is transactivation domain 1 (TAD1); that stretch reads QTVVKMFLV.

It belongs to the ATOS family.

Its subcellular location is the nucleus. Transcription regulator that may syncronize transcriptional and translational programs. The protein is Atos homolog protein B of Macaca fascicularis (Crab-eating macaque).